We begin with the raw amino-acid sequence, 1159 residues long: WASH complex subunit 5 (1159 aa).

A Phosphoserine modification is found at serine 917.

It belongs to the strumpellin family. In terms of assembly, component of the WASH core complex also described as WASH regulatory complex (SHRC) composed of WASH (WASHC1, WASH2P or WASH3P), WASHC2 (WASHC2A or WASHC2C), WASHC3, WASHC4 and WASHC5. The WASH core complex associates via WASHC2 with the F-actin-capping protein dimer (formed by CAPZA1, CAPZA2 or CAPZA3 and CAPZB) in a transient or substoichiometric manner which was initially described as WASH complex. Interacts with VCP, PI4K2A. Expressed ubiquitously.

Its subcellular location is the cytoplasm. It is found in the cytosol. It localises to the endoplasmic reticulum. The protein localises to the early endosome. In terms of biological role, acts as a component of the WASH core complex that functions as a nucleation-promoting factor (NPF) at the surface of endosomes, where it recruits and activates the Arp2/3 complex to induce actin polymerization, playing a key role in the fission of tubules that serve as transport intermediates during endosome sorting. May be involved in axonal outgrowth. Involved in cellular localization of ADRB2. Involved in cellular trafficking of BLOC-1 complex cargos such as ATP7A and VAMP7. This Homo sapiens (Human) protein is WASH complex subunit 5.